The chain runs to 375 residues: 23S rRNA (uracil(747)-C(5))-methyltransferase RlmC (375 aa).

Cys3, Cys11, Cys14, and Cys87 together coordinate [4Fe-4S] cluster. Gln212, Phe241, Glu262, and Asn307 together coordinate S-adenosyl-L-methionine. Cys334 serves as the catalytic Nucleophile.

This sequence belongs to the class I-like SAM-binding methyltransferase superfamily. RNA M5U methyltransferase family. RlmC subfamily.

It carries out the reaction uridine(747) in 23S rRNA + S-adenosyl-L-methionine = 5-methyluridine(747) in 23S rRNA + S-adenosyl-L-homocysteine + H(+). Catalyzes the formation of 5-methyl-uridine at position 747 (m5U747) in 23S rRNA. In Salmonella arizonae (strain ATCC BAA-731 / CDC346-86 / RSK2980), this protein is 23S rRNA (uracil(747)-C(5))-methyltransferase RlmC.